The following is a 39-amino-acid chain: Conotoxin Cl14.7 (39 aa).

A propeptide spanning residues 1–15 (MGDLSEADSMKHQLQ) is cleaved from the precursor.

In terms of processing, contains 2 disulfide bonds. Expressed by the venom duct.

Its subcellular location is the secreted. This Californiconus californicus (California cone) protein is Conotoxin Cl14.7.